The primary structure comprises 165 residues: Large ribosomal subunit protein uL10 (165 aa).

The protein belongs to the universal ribosomal protein uL10 family. As to quaternary structure, part of the ribosomal stalk of the 50S ribosomal subunit. The N-terminus interacts with L11 and the large rRNA to form the base of the stalk. The C-terminus forms an elongated spine to which L12 dimers bind in a sequential fashion forming a multimeric L10(L12)X complex.

In terms of biological role, forms part of the ribosomal stalk, playing a central role in the interaction of the ribosome with GTP-bound translation factors. The polypeptide is Large ribosomal subunit protein uL10 (Deinococcus deserti (strain DSM 17065 / CIP 109153 / LMG 22923 / VCD115)).